Reading from the N-terminus, the 1080-residue chain is Carbamoyl phosphate synthase large chain (1080 aa).

The segment at 1 to 403 is carboxyphosphate synthetic domain; sequence MPKRTDLKTI…SLQKALRGLE (403 aa). R129, R169, G175, G176, E208, V210, E215, G241, V242, H243, Q285, and E299 together coordinate ATP. The ATP-grasp 1 domain occupies 133 to 328; sequence RVAMGEIGLD…IAKVAAKLAV (196 aa). 3 residues coordinate Mg(2+): Q285, E299, and N301. Mn(2+) is bound by residues Q285, E299, and N301. The interval 404 to 554 is oligomerization domain; that stretch reads TGKIGLDPTG…YSTYEDECEA (151 aa). Positions 555–942 are carbamoyl phosphate synthetic domain; the sequence is LPSNRDKIMI…AFARAQEAGG (388 aa). Residues 679-876 form the ATP-grasp 2 domain; it reads QQLVDKLGLK…LAKIAARCMA (198 aa). 10 residues coordinate ATP: R715, R754, L756, E761, G787, V788, H789, S790, Q830, and E847. Mg(2+)-binding residues include Q830, E847, and N849. Residues Q830, E847, and N849 each contribute to the Mn(2+) site. The MGS-like domain occupies 943–1080; that stretch reads IKAPPLGKAF…LQELHKELEA (138 aa). Positions 943 to 1080 are allosteric domain; that stretch reads IKAPPLGKAF…LQELHKELEA (138 aa).

It belongs to the CarB family. In terms of assembly, composed of two chains; the small (or glutamine) chain promotes the hydrolysis of glutamine to ammonia, which is used by the large (or ammonia) chain to synthesize carbamoyl phosphate. Tetramer of heterodimers (alpha,beta)4. Mg(2+) serves as cofactor. Mn(2+) is required as a cofactor.

It carries out the reaction hydrogencarbonate + L-glutamine + 2 ATP + H2O = carbamoyl phosphate + L-glutamate + 2 ADP + phosphate + 2 H(+). The enzyme catalyses hydrogencarbonate + NH4(+) + 2 ATP = carbamoyl phosphate + 2 ADP + phosphate + 2 H(+). It functions in the pathway amino-acid biosynthesis; L-arginine biosynthesis; carbamoyl phosphate from bicarbonate: step 1/1. The protein operates within pyrimidine metabolism; UMP biosynthesis via de novo pathway; (S)-dihydroorotate from bicarbonate: step 1/3. Large subunit of the glutamine-dependent carbamoyl phosphate synthetase (CPSase). CPSase catalyzes the formation of carbamoyl phosphate from the ammonia moiety of glutamine, carbonate, and phosphate donated by ATP, constituting the first step of 2 biosynthetic pathways, one leading to arginine and/or urea and the other to pyrimidine nucleotides. The large subunit (synthetase) binds the substrates ammonia (free or transferred from glutamine from the small subunit), hydrogencarbonate and ATP and carries out an ATP-coupled ligase reaction, activating hydrogencarbonate by forming carboxy phosphate which reacts with ammonia to form carbamoyl phosphate. The chain is Carbamoyl phosphate synthase large chain from Xanthomonas campestris pv. campestris (strain ATCC 33913 / DSM 3586 / NCPPB 528 / LMG 568 / P 25).